Reading from the N-terminus, the 463-residue chain is Asparagine--tRNA ligase (463 aa).

Belongs to the class-II aminoacyl-tRNA synthetase family. As to quaternary structure, homodimer.

It localises to the cytoplasm. It catalyses the reaction tRNA(Asn) + L-asparagine + ATP = L-asparaginyl-tRNA(Asn) + AMP + diphosphate + H(+). The protein is Asparagine--tRNA ligase of Bacillus cereus (strain ZK / E33L).